We begin with the raw amino-acid sequence, 576 residues long: Probable DNA ligase (576 aa).

Glu-235 lines the ATP pocket. Lys-237 (N6-AMP-lysine intermediate) is an active-site residue. ATP contacts are provided by Arg-242, Arg-257, Glu-285, Phe-324, Arg-422, and Lys-428.

It belongs to the ATP-dependent DNA ligase family. Requires Mg(2+) as cofactor.

The catalysed reaction is ATP + (deoxyribonucleotide)n-3'-hydroxyl + 5'-phospho-(deoxyribonucleotide)m = (deoxyribonucleotide)n+m + AMP + diphosphate.. Its function is as follows. DNA ligase that seals nicks in double-stranded DNA during DNA replication, DNA recombination and DNA repair. This chain is Probable DNA ligase, found in Koribacter versatilis (strain Ellin345).